The primary structure comprises 377 residues: Erythronate-4-phosphate dehydrogenase (377 aa).

Residues serine 45 and threonine 67 each contribute to the substrate site. Residues 127 to 128, aspartate 147, and threonine 176 each bind NAD(+); that span reads QV. Residue arginine 209 is part of the active site. Aspartate 233 is a binding site for NAD(+). Glutamate 238 is a catalytic residue. Histidine 255 (proton donor) is an active-site residue. Residue glycine 258 participates in NAD(+) binding. A substrate-binding site is contributed by tyrosine 259.

It belongs to the D-isomer specific 2-hydroxyacid dehydrogenase family. PdxB subfamily. In terms of assembly, homodimer.

It is found in the cytoplasm. The enzyme catalyses 4-phospho-D-erythronate + NAD(+) = (R)-3-hydroxy-2-oxo-4-phosphooxybutanoate + NADH + H(+). The protein operates within cofactor biosynthesis; pyridoxine 5'-phosphate biosynthesis; pyridoxine 5'-phosphate from D-erythrose 4-phosphate: step 2/5. Catalyzes the oxidation of erythronate-4-phosphate to 3-hydroxy-2-oxo-4-phosphonooxybutanoate. In Vibrio vulnificus (strain CMCP6), this protein is Erythronate-4-phosphate dehydrogenase.